The following is a 364-amino-acid chain: SH3 and cysteine-rich domain-containing protein 3 (364 aa).

Disordered regions lie at residues 1-89 (MTEK…NDKP) and 189-244 (NKER…HKQP). Over residues 64–78 (YEEEEEEEEEEEEPP) the composition is skewed to acidic residues. Residues 89–140 (PHKFKDHFFKKPKFCDVCARMIVLNNKFGLRCKNCKTNIHEHCQSYVEMQRC) form a Phorbol-ester/DAG-type zinc finger. Positions 212 to 242 (ESARPEEGKPQDGNPEGDKKAEKKTPDDKHK) are enriched in basic and acidic residues. 2 consecutive SH3 domains span residues 247–306 (QQSH…RVRA) and 307–364 (GERV…LEEI).

As to quaternary structure, interacts (via SH3 domains) with the calcium channels CACNA1S and CACNA1C. Component of a calcium channel complex with CACNA1S and CACNB1. Component of a calcium channel complex with CACNA1C and CACNB1.

It localises to the cytoplasm. It is found in the cell membrane. The protein resides in the sarcolemma. The protein localises to the T-tubule. Required for normal excitation-contraction coupling in skeletal muscle and for normal muscle contraction in response to membrane depolarization. Required for normal Ca(2+) release from the sarcplasmic reticulum, which ultimately leads to muscle contraction. Probably functions via its effects on muscle calcium channels. Increases CACNA1S channel activity, in addition to its role in enhancing the expression of CACNA1S at the cell membrane. Has a redundant role in promoting the expression of the calcium channel CACNA1S at the cell membrane. Slows down the inactivation rate of the calcium channel CACNA1C. This chain is SH3 and cysteine-rich domain-containing protein 3 (STAC3), found in Homo sapiens (Human).